Here is a 436-residue protein sequence, read N- to C-terminus: 5-methylthioadenosine/S-adenosylhomocysteine deaminase (436 aa).

Zn(2+) contacts are provided by histidine 66 and histidine 68. Glutamate 95, arginine 147, arginine 161, and histidine 187 together coordinate substrate. Histidine 214 contributes to the Zn(2+) binding site. 2 residues coordinate substrate: glutamate 217 and aspartate 303. Residue aspartate 303 participates in Zn(2+) binding.

This sequence belongs to the metallo-dependent hydrolases superfamily. MTA/SAH deaminase family. The cofactor is Zn(2+).

The catalysed reaction is S-adenosyl-L-homocysteine + H2O + H(+) = S-inosyl-L-homocysteine + NH4(+). It catalyses the reaction S-methyl-5'-thioadenosine + H2O + H(+) = S-methyl-5'-thioinosine + NH4(+). In terms of biological role, catalyzes the deamination of 5-methylthioadenosine and S-adenosyl-L-homocysteine into 5-methylthioinosine and S-inosyl-L-homocysteine, respectively. Is also able to deaminate adenosine. This chain is 5-methylthioadenosine/S-adenosylhomocysteine deaminase, found in Symbiobacterium thermophilum (strain DSM 24528 / JCM 14929 / IAM 14863 / T).